Consider the following 980-residue polypeptide: Hypoxia up-regulated protein 1 (980 aa).

A signal peptide spans methionine 1 to serine 24. Disordered stretches follow at residues glutamate 558–valine 682 and lysine 894–leucine 980. Composition is skewed to basic and acidic residues over residues alanine 599 to lysine 656 and lysine 896 to serine 906. Over residues threonine 907–threonine 916 the composition is skewed to polar residues. Basic and acidic residues-rich tracts occupy residues aspartate 918–glutamate 949 and threonine 960–leucine 980. The Prevents secretion from ER motif lies at glutamate 977–leucine 980.

This sequence belongs to the heat shock protein 70 family.

It localises to the endoplasmic reticulum lumen. Functionally, has a pivotal role in cytoprotective cellular mechanisms triggered by oxygen deprivation. May play a role as a molecular chaperone and participate in protein folding. The polypeptide is Hypoxia up-regulated protein 1 (hyou1) (Danio rerio (Zebrafish)).